Here is a 330-residue protein sequence, read N- to C-terminus: Ribosomal RNA small subunit methyltransferase C (330 aa).

This sequence belongs to the methyltransferase superfamily. RsmC family. As to quaternary structure, monomer.

The protein localises to the cytoplasm. The enzyme catalyses guanosine(1207) in 16S rRNA + S-adenosyl-L-methionine = N(2)-methylguanosine(1207) in 16S rRNA + S-adenosyl-L-homocysteine + H(+). Functionally, specifically methylates the guanine in position 1207 of 16S rRNA in the 30S particle. This Haemophilus influenzae (strain PittGG) protein is Ribosomal RNA small subunit methyltransferase C.